Reading from the N-terminus, the 214-residue chain is Ribonuclease S-2 (214 aa).

Residues 1–22 (MSKSQLTSVFFILLCALSPIYG) form the signal peptide. Residues Cys38 and Cys43 are joined by a disulfide bond. A glycan (N-linked (GlcNAc...) asparagine) is linked at Asn49. His53 functions as the Proton donor in the catalytic mechanism. His53 contacts RNA. Asn59 is a glycosylation site (N-linked (GlcNAc...) asparagine). Cysteines 67 and 116 form a disulfide. RNA-binding positions include 91 to 92 (DL), Lys94, and Phe105. Residue Glu109 is part of the active site. An RNA-binding site is contributed by 112-113 (KH). His113 acts as the Proton acceptor in catalysis. Asn160 is a glycosylation site (N-linked (GlcNAc...) asparagine). 2 disulfide bridges follow: Cys175-Cys204 and Cys187-Cys198.

It belongs to the RNase T2 family.

The protein resides in the secreted. It localises to the extracellular space. It carries out the reaction a ribonucleotidyl-ribonucleotide-RNA + H2O = a 3'-end 3'-phospho-ribonucleotide-RNA + a 5'-end dephospho-ribonucleoside-RNA + H(+). Its function is as follows. Self-incompatibility (SI) is the inherited ability of a flowering plant to prevent self-fertilization by discriminating between self and non-self pollen during pollination. In many species of the Solanaceae, self-incompatibility is controlled by the single, multiallelic locus S. This stylar glycoprotein is associated with expression of self-incompatibility in potato. The chain is Ribonuclease S-2 (S-2) from Nicotiana alata (Winged tobacco).